A 427-amino-acid polypeptide reads, in one-letter code: Gamma-glutamyl phosphate reductase (427 aa).

It belongs to the gamma-glutamyl phosphate reductase family.

Its subcellular location is the cytoplasm. It carries out the reaction L-glutamate 5-semialdehyde + phosphate + NADP(+) = L-glutamyl 5-phosphate + NADPH + H(+). It participates in amino-acid biosynthesis; L-proline biosynthesis; L-glutamate 5-semialdehyde from L-glutamate: step 2/2. Catalyzes the NADPH-dependent reduction of L-glutamate 5-phosphate into L-glutamate 5-semialdehyde and phosphate. The product spontaneously undergoes cyclization to form 1-pyrroline-5-carboxylate. The protein is Gamma-glutamyl phosphate reductase of Anaeromyxobacter dehalogenans (strain 2CP-1 / ATCC BAA-258).